The sequence spans 62 residues: Prokaryotic ubiquitin-like protein Pup (62 aa).

Residues 1-29 are disordered; it reads MSQQSLNAPGPGAEDGNDPEAVTGGQTFA. The ARC ATPase binding stretch occupies residues 21–56; it reads AVTGGQTFASAQAADDLLDEIDSVLESNAETFVRSF. Gln62 is subject to Deamidated glutamine. Residue Gln62 forms an Isoglutamyl lysine isopeptide (Gln-Lys) (interchain with K-? in acceptor proteins) linkage.

It belongs to the prokaryotic ubiquitin-like protein family. As to quaternary structure, strongly interacts with the proteasome-associated ATPase ARC through a hydrophobic interface; the interacting region of Pup lies in its C-terminal half. There is one Pup binding site per ARC hexamer ring. Is modified by deamidation of its C-terminal glutamine to glutamate by the deamidase Dop, a prerequisite to the subsequent pupylation process.

Its pathway is protein degradation; proteasomal Pup-dependent pathway. Protein modifier that is covalently attached to lysine residues of substrate proteins, thereby targeting them for proteasomal degradation. The tagging system is termed pupylation. This Brachybacterium faecium (strain ATCC 43885 / DSM 4810 / JCM 11609 / LMG 19847 / NBRC 14762 / NCIMB 9860 / 6-10) protein is Prokaryotic ubiquitin-like protein Pup.